The primary structure comprises 307 residues: Ribonuclease Z (307 aa).

His-61, His-63, Asp-65, His-66, His-138, Asp-207, and His-265 together coordinate Zn(2+). Asp-65 functions as the Proton acceptor in the catalytic mechanism.

This sequence belongs to the RNase Z family. As to quaternary structure, homodimer. Requires Zn(2+) as cofactor.

It carries out the reaction Endonucleolytic cleavage of RNA, removing extra 3' nucleotides from tRNA precursor, generating 3' termini of tRNAs. A 3'-hydroxy group is left at the tRNA terminus and a 5'-phosphoryl group is left at the trailer molecule.. Zinc phosphodiesterase, which displays some tRNA 3'-processing endonuclease activity. Probably involved in tRNA maturation, by removing a 3'-trailer from precursor tRNA. This chain is Ribonuclease Z, found in Methanothermobacter thermautotrophicus (strain ATCC 29096 / DSM 1053 / JCM 10044 / NBRC 100330 / Delta H) (Methanobacterium thermoautotrophicum).